The sequence spans 575 residues: Carboxylesterase 5A (575 aa).

The signal sequence occupies residues Met-1–Thr-28. Cys-94 and Cys-121 form a disulfide bridge. A glycan (N-linked (GlcNAc...) asparagine) is linked at Asn-134. Ser-226 acts as the Acyl-ester intermediate in catalysis. A disulfide bridge connects residues Cys-280 and Cys-291. N-linked (GlcNAc...) asparagine glycosylation is present at Asn-281. Catalysis depends on Glu-345, which acts as the Charge relay system. N-linked (GlcNAc...) asparagine glycosylation is present at Asn-363. Catalysis depends on His-454, which acts as the Charge relay system. Asn-524 carries N-linked (GlcNAc...) asparagine glycosylation.

This sequence belongs to the type-B carboxylesterase/lipase family. In terms of processing, N-glycosylated.

It is found in the secreted. The catalysed reaction is a carboxylic ester + H2O = an alcohol + a carboxylate + H(+). Functionally, involved in the detoxification of xenobiotics and in the activation of ester and amide prodrugs. The sequence is that of Carboxylesterase 5A (Ces5a) from Mus musculus (Mouse).